A 301-amino-acid chain; its full sequence is GTPase Era (301 aa).

The Era-type G domain occupies 4–173; that stretch reads KAGFVALIGK…LECISKYLSP (170 aa). The segment at 12 to 19 is G1; sequence GKPNAGKS. 12–19 contributes to the GTP binding site; it reads GKPNAGKS. The tract at residues 38–42 is G2; the sequence is NATRK. The tract at residues 64–67 is G3; sequence DTPG. GTP contacts are provided by residues 64–68 and 122–125; these read DTPGL and SKID. The segment at 122–125 is G4; it reads SKID. A G5 region spans residues 152–154; the sequence is LSA. Residues 204-280 enclose the KH type-2 domain; sequence LSDEIPYESD…FLNLQVIAQK (77 aa).

It belongs to the TRAFAC class TrmE-Era-EngA-EngB-Septin-like GTPase superfamily. Era GTPase family. Monomer.

It is found in the cytoplasm. It localises to the cell inner membrane. An essential GTPase that binds both GDP and GTP, with rapid nucleotide exchange. Plays a role in 16S rRNA processing and 30S ribosomal subunit biogenesis and possibly also in cell cycle regulation and energy metabolism. This chain is GTPase Era, found in Helicobacter pylori (strain G27).